Here is a 302-residue protein sequence, read N- to C-terminus: GTP cyclohydrolase FolE2 (302 aa).

This sequence belongs to the GTP cyclohydrolase IV family.

The enzyme catalyses GTP + H2O = 7,8-dihydroneopterin 3'-triphosphate + formate + H(+). It participates in cofactor biosynthesis; 7,8-dihydroneopterin triphosphate biosynthesis; 7,8-dihydroneopterin triphosphate from GTP: step 1/1. Its function is as follows. Converts GTP to 7,8-dihydroneopterin triphosphate. The sequence is that of GTP cyclohydrolase FolE2 from Pseudoalteromonas translucida (strain TAC 125).